The primary structure comprises 387 residues: MSYRMFDYLVPNVNFFGPNAISVVGERCKLLGGKKALLVTDKGLRAIKDGAVDKTLTHLREAGIDVVVFDGVEPNPKDTNVRDGLEVFRKEHCDIIVTVGGGSPHDCGKGIGIAATHEGDLYSYAGIETLTNPLPPIVAVNTTAGTASEVTRHCVLTNTKTKVKFVIVSWRNLPSVSINDPLLMLGKPAPLTAATGMDALTHAVEAYISKDANPVTDAAAIQAIRLIARNLRQAVALGSNLKARENMAYASLLAGMAFNNANLGYVHAMAHQLGGLYDMPHGVANAVLLPHVARYNLIANPEKFADIAEFMGENTDGLSTMDAAELAIHAIARLSADIGIPQHLRDLGVKEADFPYMAEMALKDGNAFSNPRKGNEKEIAEIFRQAF.

The protein belongs to the iron-containing alcohol dehydrogenase family. Homooctamer. It depends on Fe cation as a cofactor.

It catalyses the reaction propane-1,3-diol + NAD(+) = 3-hydroxypropanal + NADH + H(+). With respect to regulation, inhibited by the metal chelator 1,10-phenanthroline. Functionally, catalyzes the reduction of 3-hydroxypropanal. Is considerably less active with glyceraldehyde, propionaldehyde, acetaldehyde, and butyraldehyde. Also catalyzes the oxidation of various primary, secondary, and tertiary alcohols. Is most active with substrates containing two primary alcohol groups separated by one or two carbon atoms. 1,3-propanediol is the preferred substrate. This chain is 1,3-propanediol dehydrogenase, found in Citrobacter freundii.